The primary structure comprises 207 residues: Thiamine-phosphate synthase (207 aa).

Residues 35–39 (QYRDK) and asparagine 67 each bind 4-amino-2-methyl-5-(diphosphooxymethyl)pyrimidine. Mg(2+) is bound by residues aspartate 68 and aspartate 86. 4-amino-2-methyl-5-(diphosphooxymethyl)pyrimidine is bound at residue threonine 105. Residue 132–134 (SNT) participates in 2-[(2R,5Z)-2-carboxy-4-methylthiazol-5(2H)-ylidene]ethyl phosphate binding. A 4-amino-2-methyl-5-(diphosphooxymethyl)pyrimidine-binding site is contributed by lysine 135. Glycine 162 lines the 2-[(2R,5Z)-2-carboxy-4-methylthiazol-5(2H)-ylidene]ethyl phosphate pocket.

It belongs to the thiamine-phosphate synthase family. Mg(2+) serves as cofactor.

It catalyses the reaction 2-[(2R,5Z)-2-carboxy-4-methylthiazol-5(2H)-ylidene]ethyl phosphate + 4-amino-2-methyl-5-(diphosphooxymethyl)pyrimidine + 2 H(+) = thiamine phosphate + CO2 + diphosphate. The enzyme catalyses 2-(2-carboxy-4-methylthiazol-5-yl)ethyl phosphate + 4-amino-2-methyl-5-(diphosphooxymethyl)pyrimidine + 2 H(+) = thiamine phosphate + CO2 + diphosphate. The catalysed reaction is 4-methyl-5-(2-phosphooxyethyl)-thiazole + 4-amino-2-methyl-5-(diphosphooxymethyl)pyrimidine + H(+) = thiamine phosphate + diphosphate. It functions in the pathway cofactor biosynthesis; thiamine diphosphate biosynthesis; thiamine phosphate from 4-amino-2-methyl-5-diphosphomethylpyrimidine and 4-methyl-5-(2-phosphoethyl)-thiazole: step 1/1. Functionally, condenses 4-methyl-5-(beta-hydroxyethyl)thiazole monophosphate (THZ-P) and 2-methyl-4-amino-5-hydroxymethyl pyrimidine pyrophosphate (HMP-PP) to form thiamine monophosphate (TMP). The protein is Thiamine-phosphate synthase of Pseudomonas fluorescens (strain Pf0-1).